The primary structure comprises 337 residues: Inositol 2-dehydrogenase (337 aa).

This sequence belongs to the Gfo/Idh/MocA family. Homotetramer.

The enzyme catalyses myo-inositol + NAD(+) = scyllo-inosose + NADH + H(+). Functionally, involved in the oxidation of myo-inositol (MI) to 2-keto-myo-inositol (2KMI or 2-inosose). The sequence is that of Inositol 2-dehydrogenase from Burkholderia lata (strain ATCC 17760 / DSM 23089 / LMG 22485 / NCIMB 9086 / R18194 / 383).